Here is a 278-residue protein sequence, read N- to C-terminus: Splicing factor YJU2 (278 aa).

Zn(2+)-binding residues include Cys51, Cys54, Cys88, and Cys91. Residues 228–278 are disordered; that stretch reads HRQRTNKPGNNNDEKRTPLFNPTSTKGKIQKKSSVRTNPLGIVIKRGKSLK. Short sequence motifs (nuclear localization signal) lie at residues 242-258 and 260-278; these read KRTP…KIQK and SSVR…KSLK.

Belongs to the CWC16 family. YJU2 subfamily. In terms of assembly, component of the spliceosome. Present in the activated B complex, the catalytically activated B* complex which catalyzes the branching, the catalytic step 1 C complex catalyzing the exon ligation, and the postcatalytic P complex containing the ligated exons (mRNA) and the excised lariat intron. Interacts (via C-terminus) with CLF1. Interacts (via N-terminus) with SYF1. Interacts with U2 snRNA; this interaction is direct. Identified in the CWC complex (or CEF1-associated complex), a spliceosome sub-complex reminiscent of a late-stage spliceosome composed of the U2, U5 and U6 snRNAs and at least BUD13, BUD31, BRR2, CDC40, CEF1, CLF1, CUS1, CWC2, CWC15, CWC21, CWC22, CWC23, CWC24, CWC25, CWC27, ECM2, HSH155, IST3, ISY1, LEA1, MSL1, NTC20, PRP8, PRP9, PRP11, PRP19, PRP21, PRP22, PRP45, PRP46, SLU7, SMB1, SMD1, SMD2, SMD3, SMX2, SMX3, SNT309, SNU114, SPP2, SYF1, SYF2, RSE1 and YJU2.

The protein localises to the nucleus. In terms of biological role, part of the spliceosome which catalyzes two sequential transesterification reactions, first the excision of the non-coding intron from pre-mRNA and then the ligation of the coding exons to form the mature mRNA. Plays a role (via N-terminus) in stabilizing the structure of the spliceosome catalytic core and docking of the branch helix into the active site, producing 5'-exon and lariat intron-3'-intermediates. Further stabilizes spliceosome conformation for 3'-splice site docking (via C-terminus) promoting exon ligation. The sequence is that of Splicing factor YJU2 from Saccharomyces cerevisiae (strain ATCC 204508 / S288c) (Baker's yeast).